The primary structure comprises 947 residues: Bifunctional glutamine synthetase adenylyltransferase/adenylyl-removing enzyme (947 aa).

An adenylyl removase region spans residues Met-1–Glu-440. The adenylyl transferase stretch occupies residues Ser-450–Val-947.

This sequence belongs to the GlnE family. Requires Mg(2+) as cofactor.

The enzyme catalyses [glutamine synthetase]-O(4)-(5'-adenylyl)-L-tyrosine + phosphate = [glutamine synthetase]-L-tyrosine + ADP. It carries out the reaction [glutamine synthetase]-L-tyrosine + ATP = [glutamine synthetase]-O(4)-(5'-adenylyl)-L-tyrosine + diphosphate. In terms of biological role, involved in the regulation of glutamine synthetase GlnA, a key enzyme in the process to assimilate ammonia. When cellular nitrogen levels are high, the C-terminal adenylyl transferase (AT) inactivates GlnA by covalent transfer of an adenylyl group from ATP to specific tyrosine residue of GlnA, thus reducing its activity. Conversely, when nitrogen levels are low, the N-terminal adenylyl removase (AR) activates GlnA by removing the adenylyl group by phosphorolysis, increasing its activity. The regulatory region of GlnE binds the signal transduction protein PII (GlnB) which indicates the nitrogen status of the cell. The polypeptide is Bifunctional glutamine synthetase adenylyltransferase/adenylyl-removing enzyme (Salmonella arizonae (strain ATCC BAA-731 / CDC346-86 / RSK2980)).